A 495-amino-acid chain; its full sequence is GTPase Der (495 aa).

EngA-type G domains lie at 3 to 166 (PVVA…VQDE) and 208 to 381 (IKLA…SCAT). GTP contacts are provided by residues 9–16 (GRPNVGKS), 56–60 (DTGGI), 118–121 (NKTD), 214–221 (GRPNVGKS), 261–265 (DTAGV), and 326–329 (NKWD). One can recognise a KH-like domain in the interval 382–466 (RRVSTAMLTR…PIRIQFKEGE (85 aa)).

The protein belongs to the TRAFAC class TrmE-Era-EngA-EngB-Septin-like GTPase superfamily. EngA (Der) GTPase family. Associates with the 50S ribosomal subunit.

GTPase that plays an essential role in the late steps of ribosome biogenesis. In Pectobacterium atrosepticum (strain SCRI 1043 / ATCC BAA-672) (Erwinia carotovora subsp. atroseptica), this protein is GTPase Der.